A 51-amino-acid chain; its full sequence is Protein HokD (51 aa).

A helical membrane pass occupies residues 5–25 (KAMLIALIVICLTVIVTALVT).

Belongs to the Hok/Gef family.

It is found in the cell inner membrane. Its function is as follows. Toxic component of a type I toxin-antitoxin (TA) system. When overexpressed kills cells within minutes; causes collapse of the transmembrane potential and arrest of respiration. Its toxic effect is probably neutralized by an antisense antitoxin Sok RNA. The protein is Protein HokD (hokD) of Escherichia coli O157:H7.